We begin with the raw amino-acid sequence, 223 residues long: MSDRAETPSVREPFNAIEVRILGCLIEKQATTPESYPLTLNALVLACNQKSSREPLMNLASGQVGQGLRQLEGRSLVELVMGSRADRWEHRLDKALQLTPPQLSLLGLLLLRGPQTVNELLTRSARLYAFDDGEELQHQLERLIGRELVCRLPRQPGQREERYMHRLGSAEDLEELLAARATQAAVNEGAAGGRIEALEARIAELETRLAKLEEDLGSGEPRG.

It belongs to the UPF0502 family.

This is UPF0502 protein Avin_04790 from Azotobacter vinelandii (strain DJ / ATCC BAA-1303).